Consider the following 137-residue polypeptide: Mandibular organ-inhibiting hormone (137 aa).

The N-terminal stretch at 1 to 26 is a signal peptide; that stretch reads MTTKCTVMAVVLAACICLQVLPQAYG. At Gln63 the chain carries Pyrrolidone carboxylic acid. 3 cysteine pairs are disulfide-bonded: Cys69/Cys105, Cys85/Cys101, and Cys88/Cys114. Val134 is subject to Valine amide.

Belongs to the arthropod CHH/MIH/GIH/VIH hormone family. As to expression, produced by the medulla terminalis X-organ in the eyestalks and transported to the sinus gland where it is stored and released.

The protein localises to the secreted. In terms of biological role, represses the synthesis of methyl farnesoate, the precursor of insect juvenile hormone III in the mandibular organ. Also has hyperglycemic activity. The chain is Mandibular organ-inhibiting hormone from Libinia emarginata (Portly spider crab).